The sequence spans 516 residues: uncharacterized protein (516 aa).

The first 22 residues, 1–22 (MLYRFWKTGLAIFMPGCILLSS), serve as a signal peptide directing secretion. The N-palmitoyl cysteine moiety is linked to residue Cys-23. The S-diacylglycerol cysteine moiety is linked to residue Cys-23.

It belongs to the MG067/MG068/MG395 family.

It is found in the cell membrane. This is an uncharacterized protein from Mycoplasma genitalium (strain ATCC 33530 / DSM 19775 / NCTC 10195 / G37) (Mycoplasmoides genitalium).